A 459-amino-acid chain; its full sequence is Argininosuccinate lyase (459 aa).

The protein belongs to the lyase 1 family. Argininosuccinate lyase subfamily.

It is found in the cytoplasm. The catalysed reaction is 2-(N(omega)-L-arginino)succinate = fumarate + L-arginine. It participates in amino-acid biosynthesis; L-arginine biosynthesis; L-arginine from L-ornithine and carbamoyl phosphate: step 3/3. The protein is Argininosuccinate lyase of Prochlorococcus marinus (strain MIT 9515).